We begin with the raw amino-acid sequence, 2564 residues long: Spectrin beta chain, non-erythrocytic 4 (2564 aa).

The disordered stretch occupies residues 1–37 (MAQVPGEVDNMEGLPAPNNNPAARWESPDRGWEREQP). The interval 1 to 282 (MAQVPGEVDN…IITYVVSFYH (282 aa)) is actin-binding. The span at 26 to 36 (ESPDRGWEREQ) shows a compositional bias: basic and acidic residues. Calponin-homology (CH) domains are found at residues 61–165 (AVQK…LRFQ) and 180–285 (RSAK…HYFS). Spectrin repeat units follow at residues 311–418 (IERY…AALR), 430–533 (LAQR…RLEQ), 536–641 (ALQK…AELE), 774–879 (ALHQ…WLRD), 884–982 (YRMF…RKEE), 1089–1196 (RLQR…EALV), 1306–1407 (ELQH…RQLF), 1412–1512 (ADQL…RLLL), 1515–1617 (KELH…QQVL), 1623–1725 (VEQY…ALEQ), 1728–1830 (WLYQ…AQLL), 1835–1935 (ELHK…EDAR), 1944–2046 (ALRF…WLQQ), and 2049–2123 (EVHQ…QSKQ). A disordered region spans residues 1853–1872 (KRRRLPRLTTPPEPRPSASS). Low complexity predominate over residues 2208-2225 (PAAPEDAAETPATPAAAE). Disordered stretches follow at residues 2208–2439 (PAAP…KSSN) and 2533–2564 (ARWGQTLPTTSSTDEGNPKREGGDRRASGRRK). 3 stretches are compositionally biased toward basic and acidic residues: residues 2227 to 2254 (VRPRPERQESADRAEELPRRRRPERQES), 2268 to 2278 (ERQESAEHEAA), and 2287 to 2318 (EQMERRRERRERRLERQESSEQEMPIRGDLVK). The span at 2343 to 2355 (PSLPQPRELPPGR) shows a compositional bias: pro residues. Composition is skewed to basic and acidic residues over residues 2362–2377 (LPERTPRPDRPRARDR) and 2424–2435 (FLLRKRELDANR). One can recognise a PH domain in the interval 2418–2527 (TVQHEGFLLR…WLEAVASSVA (110 aa)). A compositionally biased stretch (polar residues) spans 2538 to 2547 (TLPTTSSTDE). A compositionally biased stretch (basic and acidic residues) spans 2548 to 2564 (GNPKREGGDRRASGRRK).

Belongs to the spectrin family. In terms of tissue distribution, expressed in skeletal muscle at the sarcolemma and in the muscle capillaries (at protein level). Abundantly expressed in brain and pancreatic islets.

The protein localises to the cytoplasm. It localises to the cytoskeleton. The protein resides in the cell cortex. This is Spectrin beta chain, non-erythrocytic 4 (SPTBN4) from Homo sapiens (Human).